A 421-amino-acid chain; its full sequence is PDZ and LIM domain protein 7 (421 aa).

One can recognise a PDZ domain in the interval 1–85 (MEEYKVTLDG…KLGLVLSRFA (85 aa)). The tract at residues 115-193 (IARPFGSGTP…STGPAVRPPW (79 aa)) is disordered. The segment covering 147-172 (YPSSQMPQGQLQNGQKSRTVSNVSGK) has biased composition (polar residues). LIM zinc-binding domains follow at residues 244–302 (PVCS…ARFA), 303–362 (PNCA…MFGT), and 363–421 (KCRG…FSNV).

The protein localises to the cytoplasm. Its subcellular location is the cytoskeleton. Functionally, may function as a scaffold on which the coordinated assembly of proteins can occur. May play a role as an adapter that, via its PDZ domain, localizes LIM-binding proteins to actin filaments of both skeletal muscle and nonmuscle tissues. This Xenopus laevis (African clawed frog) protein is PDZ and LIM domain protein 7 (pdlim7).